Consider the following 54-residue polypeptide: MSPQTETKASVGFKAGVKDYKLNYYTPDYVTKDTDILAAFRVSPQPGVPPEEAG.

Positions 1–2 are excised as a propeptide; it reads MS. Pro-3 carries the N-acetylproline modification. At Lys-14 the chain carries N6,N6,N6-trimethyllysine.

This sequence belongs to the RuBisCO large chain family. Type I subfamily. Heterohexadecamer of 8 large chains and 8 small chains.

It is found in the plastid. It localises to the chloroplast. It catalyses the reaction 2 (2R)-3-phosphoglycerate + 2 H(+) = D-ribulose 1,5-bisphosphate + CO2 + H2O. The catalysed reaction is D-ribulose 1,5-bisphosphate + O2 = 2-phosphoglycolate + (2R)-3-phosphoglycerate + 2 H(+). RuBisCO catalyzes two reactions: the carboxylation of D-ribulose 1,5-bisphosphate, the primary event in carbon dioxide fixation, as well as the oxidative fragmentation of the pentose substrate in the photorespiration process. Both reactions occur simultaneously and in competition at the same active site. This chain is Ribulose bisphosphate carboxylase large chain (rbcL), found in Ilex ciliospinosa (Sichuan holly).